A 480-amino-acid polypeptide reads, in one-letter code: Proline--tRNA ligase (480 aa).

This sequence belongs to the class-II aminoacyl-tRNA synthetase family. ProS type 3 subfamily. As to quaternary structure, homodimer.

Its subcellular location is the cytoplasm. It catalyses the reaction tRNA(Pro) + L-proline + ATP = L-prolyl-tRNA(Pro) + AMP + diphosphate. Its function is as follows. Catalyzes the attachment of proline to tRNA(Pro) in a two-step reaction: proline is first activated by ATP to form Pro-AMP and then transferred to the acceptor end of tRNA(Pro). The protein is Proline--tRNA ligase of Chloroflexus aurantiacus (strain ATCC 29364 / DSM 637 / Y-400-fl).